The primary structure comprises 184 residues: ATP-dependent protease subunit HslV (184 aa).

Thr-12 is a catalytic residue. Na(+) is bound by residues Ala-166, Cys-169, and Thr-172.

The protein belongs to the peptidase T1B family. HslV subfamily. As to quaternary structure, a double ring-shaped homohexamer of HslV is capped on each side by a ring-shaped HslU homohexamer. The assembly of the HslU/HslV complex is dependent on binding of ATP.

The protein resides in the cytoplasm. The enzyme catalyses ATP-dependent cleavage of peptide bonds with broad specificity.. With respect to regulation, allosterically activated by HslU binding. Protease subunit of a proteasome-like degradation complex believed to be a general protein degrading machinery. This chain is ATP-dependent protease subunit HslV, found in Brucella abortus (strain S19).